Reading from the N-terminus, the 332-residue chain is 2,3-diketo-L-gulonate reductase (332 aa).

The Proton donor role is filled by His-44. NAD(+) contacts are provided by residues 168-174 (ITMVDMS), 224-225 (WK), and 304-306 (GHE).

Belongs to the LDH2/MDH2 oxidoreductase family. DlgD subfamily. Homodimer.

Its subcellular location is the cytoplasm. The enzyme catalyses 3-dehydro-L-gulonate + NAD(+) = 2,3-dioxo-L-gulonate + NADH + H(+). It catalyses the reaction 3-dehydro-L-gulonate + NADP(+) = 2,3-dioxo-L-gulonate + NADPH + H(+). Its function is as follows. Catalyzes the reduction of 2,3-diketo-L-gulonate in the presence of NADH, to form 3-keto-L-gulonate. The polypeptide is 2,3-diketo-L-gulonate reductase (Escherichia coli O81 (strain ED1a)).